Reading from the N-terminus, the 823-residue chain is Zygotic DNA replication licensing factor mcm6 (823 aa).

The segment at 159-186 adopts a C4-type zinc-finger fold; the sequence is CLDCQTLVRDVEQQFKYTQPSICRNPVC. The MCM domain maps to 347–554; sequence LYHNLCTSLF…TDYAIARRIV (208 aa). Residue 397–404 participates in ATP binding; it reads GDPSTAKS. The Arginine finger motif lies at 529–532; the sequence is SRFD. The disordered stretch occupies residues 666 to 713; sequence NLDQEDEHEAEEEPQEVINGDASVPSGVNGHVNGMNGHAEEPNAATPK. The span at 667–680 shows a compositional bias: acidic residues; it reads LDQEDEHEAEEEPQ. Positions 692 to 702 are enriched in low complexity; the sequence is GVNGHVNGMNG.

It belongs to the MCM family. As to quaternary structure, component of the mcm2-7 complex (RLF-M). The complex forms a toroidal hexameric ring with the proposed subunit order mcm2-mcm6-mcm4-mcm7-mcm3-mcm5. Begins to associate with zmcm3, mcm4 and mcm7 into mcm complexes at the neurula stage.

The protein resides in the nucleus. It carries out the reaction ATP + H2O = ADP + phosphate + H(+). Acts as a component of the mcm2-7 complex (mcm complex) which is the putative replicative helicase essential for 'once per cell cycle' DNA replication initiation and elongation in eukaryotic cells. The active ATPase sites in the mcm2-7 ring are formed through the interaction surfaces of two neighboring subunits such that a critical structure of a conserved arginine finger motif is provided in trans relative to the ATP-binding site of the Walker A box of the adjacent subunit. The six ATPase active sites, however, are likely to contribute differentially to the complex helicase activity. The existence of maternal and zygotic forms of mcm3 and mcm6 suggests that specific forms of mcm2-7 complexes may be used during different stages of development. May replace mmcm6 in the mcm2-7 complex. This is Zygotic DNA replication licensing factor mcm6 from Xenopus tropicalis (Western clawed frog).